Here is an 876-residue protein sequence, read N- to C-terminus: Leucine--tRNA ligase (876 aa).

Positions 43–53 match the 'HIGH' region motif; sequence PYPSGRIHMGH. The 'KMSKS' region signature appears at 632–636; the sequence is KMSKS. Lysine 635 contributes to the ATP binding site.

This sequence belongs to the class-I aminoacyl-tRNA synthetase family.

It localises to the cytoplasm. It catalyses the reaction tRNA(Leu) + L-leucine + ATP = L-leucyl-tRNA(Leu) + AMP + diphosphate. The polypeptide is Leucine--tRNA ligase (Rhodopseudomonas palustris (strain TIE-1)).